Reading from the N-terminus, the 318-residue chain is Cell growth regulator with EF hand domain protein 1 (318 aa).

The first 19 residues, Met1–Ala19, serve as a signal peptide directing secretion. EF-hand domains lie at Ser69 to Pro104 and Pro114 to His149. Ca(2+)-binding residues include Asp82, Asp84, Ser86, Gln88, Glu93, Asp127, Asn129, Asp131, and Glu138. Positions Leu177–Ile318 are disordered. 2 stretches are compositionally biased toward basic and acidic residues: residues Gly186–Leu202 and Gly223–Gly233. 3 consecutive repeat copies span residues Pro219 to Ala235, Pro236 to Ala252, and Pro253 to Ala269. A 4 X 17 AA approximate tandem repeats of P-G-P-R-G-E-A-G-G-Q-A-E-A-[KR]-G-D-A region spans residues Pro219–Gly286. Residues Ala235–Pro272 are compositionally biased toward low complexity. A 4; approximate repeat occupies Pro270–Gly286. The segment covering Glu281–Pro293 has biased composition (basic and acidic residues).

Post-translationally, probably digested extracellularly by an unknown serine protease generating extremely hydrophobic bioactive peptides.

It localises to the secreted. Functionally, mediates cell-cell adhesion in a calcium-dependent manner. Able to inhibit growth in several cell lines. The chain is Cell growth regulator with EF hand domain protein 1 from Homo sapiens (Human).